The following is a 255-amino-acid chain: Sushi domain-containing protein 3 (255 aa).

Positions 1–25 (MRWAAATLRGKARPRGRAGVTTPAP) are disordered. The Extracellular segment spans residues 1–103 (MRWAAATLRG…VPPHETFGFK (103 aa)). N27 is a glycosylation site (N-linked (GlcNAc...) asparagine). Residues 30–93 (GTCAKLRLPP…WSSGSPVCKL (64 aa)) form the Sushi domain. 2 disulfides stabilise this stretch: C32–C75 and C61–C91. Residues 104 to 124 (VAVIASIVSCAIILLMSMAFL) form a helical membrane-spanning segment. Topologically, residues 125-255 (TCCLLKCVKK…PQQPAAYALG (131 aa)) are cytoplasmic. Positions 173–255 (SGPSQAHDNH…PQQPAAYALG (83 aa)) are disordered. Over residues 179 to 191 (HDNHSFTTDHGES) the composition is skewed to basic and acidic residues.

As to expression, highly expressed in estrogen receptor-positive breast tumors.

Its subcellular location is the cell membrane. Its function is as follows. May play a role in breast tumorigenesis by promoting estrogen-dependent cell proliferation, cell-cell interactions and migration. This Homo sapiens (Human) protein is Sushi domain-containing protein 3 (SUSD3).